Consider the following 680-residue polypeptide: Probable inactive DNA (cytosine-5)-methyltransferase DRM3 (680 aa).

The disordered stretch occupies residues M1 to A24. The 42-residue stretch at S45–Q86 folds into the UBA 1 domain. Residues K91–H113 form a disordered region. The 42-residue stretch at S194–I235 folds into the UBA 2 domain. Residues I336–L663 enclose the SAM-dependent MTase DRM-type domain.

Belongs to the class I-like SAM-binding methyltransferase superfamily. DRM-methyltransferase family.

It is found in the nucleus. Involved in de novo DNA methylation. Involved in RNA-directed DNA methylation (RdDM). This Oryza sativa subsp. japonica (Rice) protein is Probable inactive DNA (cytosine-5)-methyltransferase DRM3.